Consider the following 143-residue polypeptide: Transcription antitermination protein NusB (143 aa).

This sequence belongs to the NusB family.

Its function is as follows. Involved in transcription antitermination. Required for transcription of ribosomal RNA (rRNA) genes. Binds specifically to the boxA antiterminator sequence of the ribosomal RNA (rrn) operons. This is Transcription antitermination protein NusB from Desulforamulus reducens (strain ATCC BAA-1160 / DSM 100696 / MI-1) (Desulfotomaculum reducens).